A 232-amino-acid chain; its full sequence is Probable intron-encoded endonuclease aI3 (232 aa).

Belongs to the LAGLIDADG endonuclease family.

The protein resides in the mitochondrion. Mitochondrial DNA endonuclease involved in intron homing. This is Probable intron-encoded endonuclease aI3 (aI3) from Dictyostelium discoideum (Social amoeba).